We begin with the raw amino-acid sequence, 139 residues long: Galactoside-binding soluble lectin 13 (139 aa).

Residues 6-138 (VPYKLPVSLS…DISLTSVCVC (133 aa)) enclose the Galectin domain.

Homodimer; disulfide-linked. As to expression, detected in adult and fetal spleen, fetal kidney, adult urinary bladder and placenta. Placental expression originates predominantly from the syncytiotrophoblast.

It localises to the cytoplasm. It is found in the nucleus matrix. In terms of biological role, binds beta-galactoside and lactose. Strong inducer of T-cell apoptosis. Has hemagglutinating activity towards chicken erythrocytes. This is Galactoside-binding soluble lectin 13 (LGALS13) from Homo sapiens (Human).